Here is a 491-residue protein sequence, read N- to C-terminus: Carbohydrate ABC transporter substrate-binding protein (491 aa).

Zn(2+)-binding residues include Asp-212, His-247, His-252, and Glu-256.

This sequence belongs to the bacterial solute-binding protein 1 family. As to quaternary structure, exists as a monomer, homodimer, homotrimer and homotetramer; oligomerization increases with higher protein concentration.

The protein resides in the cell surface. Functionally, probably part of an ABC transporter complex involved in carbohydrate transport. The polypeptide is Carbohydrate ABC transporter substrate-binding protein (Streptococcus pneumoniae serotype 4 (strain ATCC BAA-334 / TIGR4)).